The following is a 165-amino-acid chain: NADPH-dependent 7-cyano-7-deazaguanine reductase (165 aa).

A disordered region spans residues 1–24 (MTTRSTDQTEHLRALGQKTPYPAA). Residue cysteine 56 is the Thioimide intermediate of the active site. Aspartate 63 serves as the catalytic Proton donor. Substrate contacts are provided by residues 78–80 (VES) and 97–98 (ME).

Belongs to the GTP cyclohydrolase I family. QueF type 1 subfamily.

It localises to the cytoplasm. It carries out the reaction 7-aminomethyl-7-carbaguanine + 2 NADP(+) = 7-cyano-7-deazaguanine + 2 NADPH + 3 H(+). It participates in tRNA modification; tRNA-queuosine biosynthesis. Catalyzes the NADPH-dependent reduction of 7-cyano-7-deazaguanine (preQ0) to 7-aminomethyl-7-deazaguanine (preQ1). The polypeptide is NADPH-dependent 7-cyano-7-deazaguanine reductase (Nitratidesulfovibrio vulgaris (strain ATCC 29579 / DSM 644 / CCUG 34227 / NCIMB 8303 / VKM B-1760 / Hildenborough) (Desulfovibrio vulgaris)).